We begin with the raw amino-acid sequence, 452 residues long: Protein bfr2 (452 aa).

2 stretches are compositionally biased toward basic and acidic residues: residues 1–10 and 19–34; these read MGKVSLKDEL and QERD…SDRE. Residues 1–141 are disordered; it reads MGKVSLKDEL…SAIPEKDMDR (141 aa). Phosphoserine occurs at positions 31, 36, and 37. A compositionally biased stretch (basic and acidic residues) spans 43-57; it reads TLGREHYVDVSESKL. The segment covering 78 to 92 has biased composition (low complexity); sequence ELLNSGSLNSQSSSP. Positions 93–106 are enriched in acidic residues; sequence SEEEDSEEDENDAV.

It belongs to the AATF family.

The protein localises to the nucleus. Its subcellular location is the nucleolus. The protein is Protein bfr2 (bfr2) of Schizosaccharomyces pombe (strain 972 / ATCC 24843) (Fission yeast).